The chain runs to 271 residues: Hydroxyethylthiazole kinase (271 aa).

Methionine 50 contributes to the substrate binding site. Residues arginine 126 and threonine 172 each contribute to the ATP site. Residue glycine 199 participates in substrate binding.

It belongs to the Thz kinase family. Mg(2+) is required as a cofactor.

It catalyses the reaction 5-(2-hydroxyethyl)-4-methylthiazole + ATP = 4-methyl-5-(2-phosphooxyethyl)-thiazole + ADP + H(+). The protein operates within cofactor biosynthesis; thiamine diphosphate biosynthesis; 4-methyl-5-(2-phosphoethyl)-thiazole from 5-(2-hydroxyethyl)-4-methylthiazole: step 1/1. Catalyzes the phosphorylation of the hydroxyl group of 4-methyl-5-beta-hydroxyethylthiazole (THZ). In Akkermansia muciniphila (strain ATCC BAA-835 / DSM 22959 / JCM 33894 / BCRC 81048 / CCUG 64013 / CIP 107961 / Muc), this protein is Hydroxyethylthiazole kinase.